The sequence spans 418 residues: Glutamyl-tRNA reductase (418 aa).

Residues 49–52 (TCNR), serine 109, 114–116 (EPQ), and glutamine 120 contribute to the substrate site. Cysteine 50 functions as the Nucleophile in the catalytic mechanism. 189–194 (GAGETI) contacts NADP(+).

The protein belongs to the glutamyl-tRNA reductase family. As to quaternary structure, homodimer.

The enzyme catalyses (S)-4-amino-5-oxopentanoate + tRNA(Glu) + NADP(+) = L-glutamyl-tRNA(Glu) + NADPH + H(+). The protein operates within porphyrin-containing compound metabolism; protoporphyrin-IX biosynthesis; 5-aminolevulinate from L-glutamyl-tRNA(Glu): step 1/2. Its function is as follows. Catalyzes the NADPH-dependent reduction of glutamyl-tRNA(Glu) to glutamate 1-semialdehyde (GSA). The chain is Glutamyl-tRNA reductase from Escherichia coli O9:H4 (strain HS).